The following is a 317-amino-acid chain: 3-oxoacyl-[acyl-carrier-protein] reductase 5, chloroplastic (317 aa).

The transit peptide at 1 to 57 (TTVAATKLTSLKATAGKLGYREICQVRQWAPLKSAMPHFGMLRCATSTVVKAQAQAQ) directs the protein to the chloroplast. 79–103 (VTGASRGIGKAIALSLGKAGCKVLV) lines the NADP(+) pocket. Ser211 contributes to the substrate binding site. Residue Tyr224 is the Proton acceptor of the active site.

Belongs to the short-chain dehydrogenases/reductases (SDR) family. Homotetramer.

The protein localises to the plastid. The protein resides in the chloroplast. It carries out the reaction a (3R)-hydroxyacyl-[ACP] + NADP(+) = a 3-oxoacyl-[ACP] + NADPH + H(+). It functions in the pathway lipid metabolism; fatty acid biosynthesis. The protein is 3-oxoacyl-[acyl-carrier-protein] reductase 5, chloroplastic (bkr1) of Brassica napus (Rape).